The chain runs to 404 residues: Multidrug resistance protein MdtG (404 aa).

11 consecutive transmembrane segments (helical) span residues 19–39 (LGCF…PLYV), 56–76 (LVFS…GGLA), 90–110 (LGMA…QFLI), 113–133 (ALLG…ATQV), 144–164 (TLST…GLLA), 171–191 (PVFF…FFFI), 222–242 (LFVT…ILTL), 254–274 (IAFI…LSAP), 288–308 (ILIV…FVQT), 317–337 (FLLG…LVYN), and 376–396 (AVFC…WNSL).

The protein belongs to the major facilitator superfamily. DHA1 family. MdtG (TC 2.A.1.2.20) subfamily.

It localises to the cell inner membrane. This Salmonella agona (strain SL483) protein is Multidrug resistance protein MdtG.